We begin with the raw amino-acid sequence, 475 residues long: Subtilisin-like protease PopC (475 aa).

2 disordered regions span residues 1-27 and 57-106; these read MKSYLLVPKESIETQARVGPRGTEQGE and TLPG…QTGA. One can recognise a Peptidase S8 domain in the interval 165 to 475; it reads NRGMSSLAER…KTGKGLAVFR (311 aa). Catalysis depends on charge relay system residues aspartate 201, histidine 243, and serine 423.

It belongs to the peptidase S8 family. In terms of assembly, interacts with PopD in non-starving cells.

Its subcellular location is the cytoplasm. It is found in the periplasm. The protein resides in the secreted. Its activity is regulated as follows. In non-starving cells, secretion and protease activity are inhibited by formation of a cytoplasmic complex with PopD. In response to starvation, PopD is degraded in a RelA- and FtsH(D)-dependent manner, thereby releasing pre-formed PopC for secretion. Secreted and active during starvation, and rapidly degraded upon secretion. Secretion is significantly and reversibly reduced by carbonyl cyanide m-chlorophenyl hydrazine (CCCP), which dissipates or reduces the proton motive force (PMF), and by nigericin, which affects the pH gradient. Functionally, required for fruiting body formation, a multicellular developmental program that is induced in response to starvation. Acts as a subtilisin-like protease that directly cleaves the CsgA precursor protein (p25) on the cell surface to generate the intercellular C-signal protein (p17) in starving cells. Preferentially acts in cis, i.e. PopC secreted by a cell only cleaves p25 on that cell. May also be important for processing of other protein(s) that are important for development. In Myxococcus xanthus (strain DK1622), this protein is Subtilisin-like protease PopC.